Reading from the N-terminus, the 736-residue chain is Catalase-peroxidase 2 (736 aa).

The N-terminal stretch at 1 to 23 (MIKKTLPVLILLALSGSFSTAVA) is a signal peptide. Positions 102-223 (WHGAGTYRTY…LAATQMGLIY (122 aa)) form a cross-link, tryptophyl-tyrosyl-methioninium (Trp-Tyr) (with M-249). H103 serves as the catalytic Proton acceptor. Positions 223–249 (YVNPEGPGGKPDPLASAKDIREAFSRM) form a cross-link, tryptophyl-tyrosyl-methioninium (Tyr-Met) (with W-102). H264 contacts heme b.

Belongs to the peroxidase family. Peroxidase/catalase subfamily. As to quaternary structure, homodimer or homotetramer. Heme b is required as a cofactor. Post-translationally, formation of the three residue Trp-Tyr-Met cross-link is important for the catalase, but not the peroxidase activity of the enzyme.

It is found in the periplasm. It catalyses the reaction H2O2 + AH2 = A + 2 H2O. The catalysed reaction is 2 H2O2 = O2 + 2 H2O. Its function is as follows. Bifunctional enzyme with both catalase and broad-spectrum peroxidase activity. The polypeptide is Catalase-peroxidase 2 (Escherichia coli O157:H7).